The following is a 529-amino-acid chain: Mannuronan C5-epimerase (529 aa).

Residues 1-30 (MGACAMNPQALKGSAMLAAAMLLASGAAMA) form the signal peptide. PbH1 repeat units follow at residues 229–256 (GTETYISNTKMASFGYANSKSYGVSISQ), 291–313 (TTGFVIKGNTYKDNIVYGIDPHD), 315–338 (SHGLIIADNTVYGTKKKHGIIISR), 340–362 (VNDSFIFNNRSYDNKLSGLVLDR), 364–386 (SVNNFVADNEFYRNHTDGITLYE), and 387–409 (SGDNLLWGNKVIANRRHGIRVRN). His-312 functions as the Proton acceptor in the catalytic mechanism.

Belongs to the D-mannuronate C5-epimerase family.

Its subcellular location is the periplasm. The enzyme catalyses [(1-&gt;4)-beta-D-mannuronosyl](n) = [alginate](n). It functions in the pathway glycan biosynthesis; alginate biosynthesis. In terms of biological role, catalyzes the epimerization of beta-D-mannuronate to alpha-L-guluronate during the synthesis of the linear polysaccharide alginate. In addition, is part of a periplasmic protein complex that protects alginate from degradation by AlgL by channeling the newly formed alginate polymer through a scaffold that transfers the alginate polymer through the periplasmic space to the outer membrane secretin AlgE. In Pseudomonas fluorescens, this protein is Mannuronan C5-epimerase.